Here is a 134-residue protein sequence, read N- to C-terminus: Large ribosomal subunit protein bL20 (134 aa).

The protein belongs to the bacterial ribosomal protein bL20 family.

Its function is as follows. Binds directly to 23S ribosomal RNA and is necessary for the in vitro assembly process of the 50S ribosomal subunit. It is not involved in the protein synthesizing functions of that subunit. The protein is Large ribosomal subunit protein bL20 of Brucella abortus (strain S19).